An 85-amino-acid chain; its full sequence is Large ribosomal subunit protein bL27 (85 aa).

The protein belongs to the bacterial ribosomal protein bL27 family.

In Variovorax paradoxus (strain S110), this protein is Large ribosomal subunit protein bL27.